A 404-amino-acid chain; its full sequence is Formate-dependent phosphoribosylglycinamide formyltransferase (404 aa).

N(1)-(5-phospho-beta-D-ribosyl)glycinamide is bound by residues 25-26 and Glu85; that span reads EL. ATP-binding positions include Arg118, Lys159, 164–169, 199–202, and Glu207; these read SSGKGQ and EGFI. In terms of domain architecture, ATP-grasp spans 123 to 318; that stretch reads RLAAEELGLP…EFELHARAIL (196 aa). The Mg(2+) site is built by Glu277 and Glu289. Residues Asp296, Lys365, and 372 to 373 contribute to the N(1)-(5-phospho-beta-D-ribosyl)glycinamide site; that span reads RR.

It belongs to the PurK/PurT family. In terms of assembly, homodimer.

The catalysed reaction is N(1)-(5-phospho-beta-D-ribosyl)glycinamide + formate + ATP = N(2)-formyl-N(1)-(5-phospho-beta-D-ribosyl)glycinamide + ADP + phosphate + H(+). It participates in purine metabolism; IMP biosynthesis via de novo pathway; N(2)-formyl-N(1)-(5-phospho-D-ribosyl)glycinamide from N(1)-(5-phospho-D-ribosyl)glycinamide (formate route): step 1/1. Its function is as follows. Involved in the de novo purine biosynthesis. Catalyzes the transfer of formate to 5-phospho-ribosyl-glycinamide (GAR), producing 5-phospho-ribosyl-N-formylglycinamide (FGAR). Formate is provided by PurU via hydrolysis of 10-formyl-tetrahydrofolate. The chain is Formate-dependent phosphoribosylglycinamide formyltransferase from Burkholderia lata (strain ATCC 17760 / DSM 23089 / LMG 22485 / NCIMB 9086 / R18194 / 383).